The chain runs to 139 residues: Probable cytochrome b5 (139 aa).

The Cytochrome b5 heme-binding domain maps to 2 to 78; the sequence is SAEFTYQDVA…LEPLLVGTLK (77 aa). The heme site is built by His37 and His61. Residues 105–125 form a helical membrane-spanning segment; that stretch reads GLGIGLYAVLVLGGLAGFAAY.

This sequence belongs to the cytochrome b5 family.

It localises to the endoplasmic reticulum membrane. Its subcellular location is the microsome membrane. Membrane bound hemoprotein which function as an electron carrier for several membrane bound oxygenases. The chain is Probable cytochrome b5 from Neurospora crassa (strain ATCC 24698 / 74-OR23-1A / CBS 708.71 / DSM 1257 / FGSC 987).